The sequence spans 67 residues: Large ribosomal subunit protein bL35 (67 aa).

This sequence belongs to the bacterial ribosomal protein bL35 family.

The sequence is that of Large ribosomal subunit protein bL35 from Zymomonas mobilis subsp. mobilis (strain ATCC 31821 / ZM4 / CP4).